Consider the following 288-residue polypeptide: Leucine-rich repeat-containing protein 72 (288 aa).

LRR repeat units follow at residues 47–68 (DVFE…SRFK), 69–90 (KLKY…TRNY), 91–112 (CLAE…HYLP), and 113–134 (SLHI…VKEL). In terms of domain architecture, LRRCT spans 148–186 (NPLCQYNLYRLYIIYHLPGVELLDRNQVTEKERRSMITL).

The protein is Leucine-rich repeat-containing protein 72 (LRRC72) of Bos taurus (Bovine).